Consider the following 198-residue polypeptide: Na(+)-translocating NADH-quinone reductase subunit E (198 aa).

6 helical membrane passes run 11–31 (SVFIENMALSFFLGMCTFLAV), 35–55 (VSTAFGLGIAVIVVLGIAVPV), 77–97 (FLNFITFIGVIAALVQILEMV), 110–130 (GIFLPLITVNCAIFGGVSFMV), 140–160 (VVYGIGAGTGWMLAIVALAGI), and 176–196 (LGITFITVGLMALGFMSFSGI).

The protein belongs to the NqrDE/RnfAE family. As to quaternary structure, composed of six subunits; NqrA, NqrB, NqrC, NqrD, NqrE and NqrF.

Its subcellular location is the cell inner membrane. It carries out the reaction a ubiquinone + n Na(+)(in) + NADH + H(+) = a ubiquinol + n Na(+)(out) + NAD(+). Functionally, NQR complex catalyzes the reduction of ubiquinone-1 to ubiquinol by two successive reactions, coupled with the transport of Na(+) ions from the cytoplasm to the periplasm. NqrA to NqrE are probably involved in the second step, the conversion of ubisemiquinone to ubiquinol. The sequence is that of Na(+)-translocating NADH-quinone reductase subunit E from Pasteurella multocida (strain Pm70).